The primary structure comprises 810 residues: MFYSHCLVSRKGPLGAIWVAAYFFKKLKKSQVKATHIPSSVDQILQKELDALTYRVLAYLLLGVVRIYSKKVDFLFDDCNKALIGVKEFVAKERNREKTGVSLPASIECFSIALPERFELDAFDLGVLEDFHGGNVKPHEDITLKDGSQETERMDMYSMERFDMEEDLLFTFHETFSTNHNENKHESFAHDMELDAENVRDTTEEASVRVVEAEPLDSNEPSRDHQNASRHREDPESDDILLEPQMSEDIRIAQEEDTVRETICTIVQRLVDSHESSGDNLHRDGHTENLESEKTSKKTSCEEMQHDRSLPSECGIPEAIHGIEDQPSGATRINGEKEIPEMSTLEKPEPVSVTGSRDLQEGVEKCRDHNEAEMADFELFHGSHKEQSETSEVNLHGSEKGFLSDMTVSKDPSSEFNATDTPVTVTPKTPSRLKISEGGTSPQFSIIPTPAAKESSRVSRKRKCLIDDEVIIPNKVMKEMIEDSSKLLAKRRNVPHTDCPERRTKRFANPFRSFLEPLIQYGSSDLQSLFCQPIKLKNWATTGTPKDTKIARHKEKSSLDTVRSPGVILSSDQTENTQEIMETPQAAALAGLKVTAGNSNVVSVEMGASSTTSGTAHQTENAAETPVKPSVIAPETPVRTSEQTVIAPETPVVSEQVEIAPETPVRESMSKRFFKDPGTCYKKSRPASPFTSFEEHPSVYYVENRDLDTILMNDEQVNADERQDLQQETWSSRTRNVAKFLEKTFLEQREREEEEKVSLLQLCRGRTQKESARLFYETLVLKTKGYVEVKQNHPYSDVFLMRVSRPQKAC.

Disordered regions lie at residues 200-244 (RDTT…LLEP), 273-315 (SHES…SECG), and 606-626 (MGAS…AETP). 2 stretches are compositionally biased toward basic and acidic residues: residues 220-234 (EPSR…HRED) and 273-310 (SHES…DRSL). Polar residues predominate over residues 606-622 (MGASSTTSGTAHQTENA).

This sequence belongs to the rad21 family. As to quaternary structure, component of the cohesin complex. In terms of tissue distribution, low expression in shoots, buds, siliques, leaves and roots. Found in, but not limited to, actively dividing cells: in procambium, protoderm and ground meristem in roots, and in shoot and floral meristems.

The protein resides in the nucleus. May be involved in sister chromatid cohesion during mitosis. This is Sister chromatid cohesion 1 protein 2 (SYN2) from Arabidopsis thaliana (Mouse-ear cress).